The following is a 428-amino-acid chain: Serine--tRNA ligase (428 aa).

231–233 serves as a coordination point for L-serine; it reads TAE. ATP-binding positions include 262–264 and valine 278; that span reads RRE. Glutamate 285 is a binding site for L-serine. 349 to 352 is an ATP binding site; the sequence is EVSS. Serine 384 is an L-serine binding site.

It belongs to the class-II aminoacyl-tRNA synthetase family. Type-1 seryl-tRNA synthetase subfamily. Homodimer. The tRNA molecule binds across the dimer.

It is found in the cytoplasm. The enzyme catalyses tRNA(Ser) + L-serine + ATP = L-seryl-tRNA(Ser) + AMP + diphosphate + H(+). It carries out the reaction tRNA(Sec) + L-serine + ATP = L-seryl-tRNA(Sec) + AMP + diphosphate + H(+). It functions in the pathway aminoacyl-tRNA biosynthesis; selenocysteinyl-tRNA(Sec) biosynthesis; L-seryl-tRNA(Sec) from L-serine and tRNA(Sec): step 1/1. Functionally, catalyzes the attachment of serine to tRNA(Ser). Is also able to aminoacylate tRNA(Sec) with serine, to form the misacylated tRNA L-seryl-tRNA(Sec), which will be further converted into selenocysteinyl-tRNA(Sec). In Chlamydia trachomatis serovar L2 (strain ATCC VR-902B / DSM 19102 / 434/Bu), this protein is Serine--tRNA ligase.